Reading from the N-terminus, the 531-residue chain is Beta-hexosaminidase subunit beta (531 aa).

The first 21 residues, 1 to 21 (MEVLPGLLRLLAALVVAERWA), serve as a signal peptide directing secretion. Residues cysteine 67 and cysteine 111 are joined by a disulfide bond. N-linked (GlcNAc...) asparagine glycosylation is found at asparagine 120, asparagine 164, and asparagine 301. 2 disulfides stabilise this stretch: cysteine 283–cysteine 334 and cysteine 508–cysteine 525. Glutamate 329 (proton donor) is an active-site residue.

Belongs to the glycosyl hydrolase 20 family. In terms of assembly, there are 3 forms of beta-hexosaminidase: hexosaminidase A is a heterodimer composed of one subunit alpha and one subunit beta (chain A and B); hexosaminidase B is a homodimer of two beta subunits (two chains A and B); hexosaminidase S is a homodimer of two alpha subunits. The composition of the dimer (isozyme A versus isozyme S) has a significant effect on the substrate specificity of the alpha subunit active site.

It is found in the lysosome. Its subcellular location is the cytoplasmic vesicle. The protein localises to the secretory vesicle. It localises to the cortical granule. The catalysed reaction is Hydrolysis of terminal non-reducing N-acetyl-D-hexosamine residues in N-acetyl-beta-D-hexosaminides.. It catalyses the reaction N-acetyl-beta-D-galactosaminyl-(1-&gt;4)-beta-D-3-sulfogalactosyl-(1-&gt;4)-beta-D-glucosyl-(1&lt;-&gt;1')-ceramide + H2O = a beta-D-3-sulfogalactosyl-(1-&gt;4)-beta-D-glucosyl-(1&lt;-&gt;1')-ceramide + N-acetyl-beta-D-galactosamine. It carries out the reaction a ganglioside GM2 (d18:1(4E)) + H2O = a ganglioside GM3 (d18:1(4E)) + N-acetyl-beta-D-galactosamine. The enzyme catalyses a ganglioside GM2 + H2O = a ganglioside GM3 + N-acetyl-beta-D-galactosamine. The catalysed reaction is beta-D-GalNAc-(1-&gt;4)-alpha-L-IdoA-(1-&gt;3)-beta-D-GalNAc-4-sulfate-(1-&gt;4)-alpha-L-IdoA-(1-&gt;3)-D-GalNAc-4-sulfate + H2O = alpha-L-IdoA-(1-&gt;3)-beta-D-GalNAc-4-sulfate-(1-&gt;4)-alpha-L-IdoA-(1-&gt;3)-D-GalNAc-4-sulfate + N-acetyl-D-galactosamine. It catalyses the reaction N-acetyl-beta-D-6-sulfogalactosaminyl-(1-&gt;4)-alpha-L-iduronyl-(1-&gt;3)-N-acetyl-D-6-sulfogalactosamine + H2O = alpha-L-iduronyl-(1-&gt;3)-N-acetyl-D-6-sulfogalactosamine + N-acetyl-D-6-sulfogalactosamine. Addition of GM2A stimulates the hydrolysis of sulfated glycosphingolipid SM2 and the ganglioside GM2. Its function is as follows. Hydrolyzes the non-reducing end N-acetyl-D-hexosamine and/or sulfated N-acetyl-D-hexosamine of glycoconjugates, such as the oligosaccharide moieties from proteins and neutral glycolipids, or from certain mucopolysaccharides. The isozyme B does not hydrolyze each of these substrates, however hydrolyzes efficiently neutral oligosaccharide. Only the isozyme A is responsible for the degradation of GM2 gangliosides in the presence of GM2A. During fertilization is responsible, at least in part, for the zona block to polyspermy. Present in the cortical granules of non-activated oocytes, is exocytosed during the cortical reaction in response to oocyte activation and inactivates the sperm galactosyltransferase-binding site, accounting for the block in sperm binding to the zona pellucida. The chain is Beta-hexosaminidase subunit beta from Sus scrofa (Pig).